The chain runs to 115 residues: Histidine decarboxylase proenzyme (115 aa).

S83 carries the pyruvic acid (Ser) modification.

As to quaternary structure, the proenzyme is a hexamer of identical pi chains; each pi chain monomer is cleaved to form a small (or beta) chain and a large (or alpha) chain by non-hydrolytic self-catalysis. It depends on pyruvate as a cofactor.

It catalyses the reaction L-histidine + H(+) = histamine + CO2. The chain is Histidine decarboxylase proenzyme from Lentilactobacillus buchneri (Lactobacillus buchneri).